The following is an 88-amino-acid chain: ATP synthase F(0) complex subunit f, mitochondrial (88 aa).

An N-acetylalanine modification is found at Ala2. Ser3 bears the Phosphoserine mark. Residue Lys16 is modified to N6-acetyllysine. Residues 62 to 79 (MVLAAYVVFSYCISYKEL) form a helical membrane-spanning segment.

The protein belongs to the ATPase F chain family. In terms of assembly, component of the ATP synthase complex composed at least of ATP5F1A/subunit alpha, ATP5F1B/subunit beta, ATP5MC1/subunit c (homooctomer), MT-ATP6/subunit a, MT-ATP8/subunit 8, ATP5ME/subunit e, ATP5MF/subunit f, ATP5MG/subunit g, ATP5MK/subunit k, ATP5MJ/subunit j, ATP5F1C/subunit gamma, ATP5F1D/subunit delta, ATP5F1E/subunit epsilon, ATP5PF/subunit F6, ATP5PB/subunit b, ATP5PD/subunit d, ATP5PO/subunit OSCP. ATP synthase complex consists of a soluble F(1) head domain (subunits alpha(3) and beta(3)) - the catalytic core - and a membrane F(0) domain - the membrane proton channel (subunits c, a, 8, e, f, g, k and j). These two domains are linked by a central stalk (subunits gamma, delta, and epsilon) rotating inside the F1 region and a stationary peripheral stalk (subunits F6, b, d, and OSCP).

It is found in the mitochondrion. Its subcellular location is the mitochondrion inner membrane. Its function is as follows. Subunit f, of the mitochondrial membrane ATP synthase complex (F(1)F(0) ATP synthase or Complex V) that produces ATP from ADP in the presence of a proton gradient across the membrane which is generated by electron transport complexes of the respiratory chain. ATP synthase complex consist of a soluble F(1) head domain - the catalytic core - and a membrane F(1) domain - the membrane proton channel. These two domains are linked by a central stalk rotating inside the F(1) region and a stationary peripheral stalk. During catalysis, ATP synthesis in the catalytic domain of F(1) is coupled via a rotary mechanism of the central stalk subunits to proton translocation. In vivo, can only synthesize ATP although its ATP hydrolase activity can be activated artificially in vitro. Part of the complex F(0) domain. This is ATP synthase F(0) complex subunit f, mitochondrial from Rattus norvegicus (Rat).